A 170-amino-acid chain; its full sequence is Probable chorismate pyruvate-lyase (170 aa).

Positions 77, 114, and 157 each coordinate substrate.

It belongs to the UbiC family.

It is found in the cytoplasm. The enzyme catalyses chorismate = 4-hydroxybenzoate + pyruvate. The protein operates within cofactor biosynthesis; ubiquinone biosynthesis. In terms of biological role, removes the pyruvyl group from chorismate, with concomitant aromatization of the ring, to provide 4-hydroxybenzoate (4HB) for the ubiquinone pathway. In Pasteurella multocida (strain Pm70), this protein is Probable chorismate pyruvate-lyase.